We begin with the raw amino-acid sequence, 544 residues long: Spore germination protein KA (544 aa).

The segment at 1-36 (MPLFSKRKNNTDSKDKQNTDERNQEQQQEKERPVLI) is disordered. The segment covering 9–33 (NNTDSKDKQNTDERNQEQQQEKERP) has biased composition (basic and acidic residues). Helical transmembrane passes span 279 to 299 (FAIIVDGTPFVLIAPALFVQF), 321 to 341 (VLVFFISLVAPAVYVAATTFH), 392 to 412 (AVSIVGALVIGQAAVQAGIVS), 416 to 436 (VIIVALTAIASFATPAFAMAI), and 443 to 463 (FIFIIASAVMGFYGLILGIIM). A compositionally biased stretch (basic and acidic residues) spans 504–523 (KRPESVSKEDKVRQGKDQRP). Residues 504-544 (KRPESVSKEDKVRQGKDQRPEPAASRGMVNKDLEEGDQNGT) are disordered.

It belongs to the GerABKA family.

The protein resides in the cell membrane. Its function is as follows. Involved in the germination response to the combination of glucose, fructose, L-asparagine, and KCl. This is Spore germination protein KA (gerKA) from Bacillus subtilis (strain 168).